A 4367-amino-acid polypeptide reads, in one-letter code: Guanylate cyclase (4367 aa).

A compositionally biased stretch (polar residues) spans 1-10; that stretch reads MKKTRTTAAE. Residues 1–70 form a disordered region; it reads MKKTRTTAAE…MSFLQGKHQQ (70 aa). At 1 to 150 the chain is on the cytoplasmic side; that stretch reads MKKTRTTAAE…FKNLWEQFHR (150 aa). Residues 19–33 are compositionally biased toward basic and acidic residues; the sequence is PHDEHRGRGREHGGA. The span at 54 to 63 shows a compositional bias: polar residues; it reads HQATQKQMSF. A helical transmembrane segment spans residues 151 to 171; sequence VINWWFLVMAIIQAIPQLHYN. The Extracellular portion of the chain corresponds to 172–174; that stretch reads PNH. Residues 175–195 form a helical membrane-spanning segment; that stretch reads AWSTALPFAIVLVFGMLKDAF. Residues 196–373 are Cytoplasmic-facing; the sequence is TDLGRRERDR…GFKRPHIEKD (178 aa). The helical transmembrane segment at 374–394 threads the bilayer; sequence INTYLFISFFIVFLTILISVM. The Extracellular portion of the chain corresponds to 395–452; it reads SKWSVQERDSGDTGVTDAGASSGSGSSSGETSQTYGSSVEFMLGSRDLLQNPWMSILR. The disordered stretch occupies residues 402 to 426; that stretch reads RDSGDTGVTDAGASSGSGSSSGETS. The span at 407–426 shows a compositional bias: low complexity; that stretch reads TGVTDAGASSGSGSSSGETS. The chain crosses the membrane as a helical span at residues 453-473; that stretch reads FLAVYAPVLPLSLPLILDVVY. At 474-2258 the chain is on the cytoplasmic side; the sequence is LLQSVLIEGD…VHGRLSLMRV (1785 aa). 10 disordered regions span residues 486–535, 550–699, 831–918, 932–966, 980–1047, 1079–1164, 1344–1593, 1607–1652, 1773–1861, and 1881–1946; these read IRGG…QQPL, SEKF…ISGR, ETSA…ASSL, RLEE…PQLA, VGIQ…GELS, GMSF…MPAV, PSGT…SLKS, FRRG…TGTG, GGRG…GLRS, and DKQH…PQHL. The span at 523–535 shows a compositional bias: polar residues; sequence AHSSQNASLQQPL. Basic and acidic residues-rich tracts occupy residues 605-628 and 670-679; these read ETLR…REQL and RRSDDRDRKS. A compositionally biased stretch (low complexity) spans 850–863; it reads SAASSRSQSAPASA. A compositionally biased stretch (polar residues) spans 880–892; sequence QTLTNQQTGQQSP. The segment covering 906–917 has biased composition (low complexity); it reads ASPGAADSPASS. A compositionally biased stretch (basic and acidic residues) spans 932–948; the sequence is RLEETGSQKEEDSRSDR. Residues 983-996 show a composition bias toward low complexity; it reads QSQHSSQSLLSSRQ. Residues 1025–1047 show a composition bias toward basic and acidic residues; it reads DRMYSRDYHRESRSSSPRDGELS. Polar residues-rich tracts occupy residues 1084-1094 and 1117-1130; these read SRPSSQFTFSS and RSLT…TASP. Residues 1344 to 1357 show a composition bias toward low complexity; that stretch reads PSGTSASSGAPSGP. Gly residues-rich tracts occupy residues 1370-1381 and 1389-1400; these read QGQGHGSLGAPG and CLGGAGGSGARG. Residues 1443–1454 are compositionally biased toward pro residues; it reads VPSPRPLSPAGP. Over residues 1527–1542 the composition is skewed to basic and acidic residues; that stretch reads SFKEKHEEFAFSKDED. The segment covering 1543–1567 has biased composition (acidic residues); sequence TATVDQDDTQSATDEEHDVEGEEEE. Over residues 1583–1593 the composition is skewed to low complexity; that stretch reads SASASLMSLKS. Composition is skewed to polar residues over residues 1628–1652, 1779–1791, and 1843–1852; these read GRSS…TGTG, VSLS…SSAK, and VNPSGQTYSQ. Residues 1881 to 1922 are compositionally biased toward basic and acidic residues; that stretch reads DKQHQRGHGPEGDEGSHELEGHDAHTGDSHGGHHRDQAEPRA. Over residues 1933-1942 the composition is skewed to polar residues; that stretch reads RLPQKTQNRL. A helical transmembrane segment spans residues 2259–2279; sequence STVILWSFFKSLCIGLPTFLF. Residues 2280–2289 lie on the Extracellular side of the membrane; sequence QPQAFWSAVE. The helical transmembrane segment at 2290-2310 threads the bilayer; sequence VYDPLLLMIVDFFWTTLPGII. The Cytoplasmic portion of the chain corresponds to 2311–2343; sequence HGYSDQDLPTHLLPSVPVLYTPGRRRLYFNGFR. Residues 2344-2364 traverse the membrane as a helical segment; it reads FILWTVEGIIYSFLIFYLLQA. Residues 2365-2376 are Extracellular-facing; sequence TWMDGNTFHDGQ. Residues 2377 to 2397 form a helical membrane-spanning segment; the sequence is VLGFHSYGILLLFGSLLQSNV. The Cytoplasmic portion of the chain corresponds to 2398 to 2408; the sequence is RIILETSLWTP. Residues 2409–2429 form a helical membrane-spanning segment; sequence TFLFTTIVLCTIMFFPTVLLY. The Extracellular portion of the chain corresponds to 2430 to 2444; sequence SVTGWPRRYMELAGR. Residues 2445 to 2465 form a helical membrane-spanning segment; that stretch reads VVFAWPMLYFLIPLWVSIGIL. Topologically, residues 2466–2724 are cytoplasmic; sequence VQLLLQVFTS…LKRLVPWYRV (259 aa). Residues 2725-2745 traverse the membrane as a helical segment; that stretch reads IFMLIALYQLLSFLTEYFIDI. Residues 2746–2762 are Extracellular-facing; that stretch reads HWNPGETEMEPWMCVPT. The chain crosses the membrane as a helical span at residues 2763–2783; that stretch reads LVVEIGFAAVVVCTFYDFIFL. The Cytoplasmic portion of the chain corresponds to 2784–2785; sequence DH. Residues 2786–2806 traverse the membrane as a helical segment; that stretch reads FSLILNSIVFLMVSSSIVFYT. Over 2807–2823 the chain is Extracellular; it reads ASHVDGTLTSVLFPVFT. Residues 2824-2844 traverse the membrane as a helical segment; the sequence is FVILRISFLQAVVWNILFLIV. Residues 2845–2858 lie on the Cytoplasmic side of the membrane; the sequence is TVARFMLDKKYLPP. Residues 2859-2879 traverse the membrane as a helical segment; it reads LNFVHYIPLFIGIDVFVAFVG. Residues 2880-2903 are Extracellular-facing; the sequence is YRLEYNQRKSFLLDYSVDASRRKQ. A helical transmembrane segment spans residues 2904 to 2924; it reads REILNTMLPSFVVDQMINSEL. Over 2925–3693 the chain is Cytoplasmic; the sequence is NEEGIPTSLK…RTHFYNNKSN (769 aa). In terms of domain architecture, Guanylate cyclase 1 spans 2942–3150; that stretch reads SVIFCDVYEF…DTVNTASRMK (209 aa). 6 disordered regions span residues 3214-3245, 3359-3402, 3456-3475, 3485-3508, 3523-3596, and 3620-3653; these read DVIS…ASSG, GQTE…SRFD, SGDE…EVPL, QARE…HTPT, GCAA…ETEK, and FRRR…VDDE. Positions 3383-3402 are enriched in basic and acidic residues; sequence RADRRPAGRREDSRGDSRFD. Composition is skewed to basic and acidic residues over residues 3485–3499, 3529–3541, and 3549–3569; these read QARE…KRSG, EEEK…RESE, and TESR…DARE. Residues 3626 to 3637 show a composition bias toward low complexity; the sequence is AAPSEAASPSSA. Residues 3694–3714 traverse the membrane as a helical segment; that stretch reads INTIEQALIIFLVTFCVQTLT. At 3715-3736 the chain is on the extracellular side; sequence RLALPRFYVVCSHHTINLHVCT. Residues 3737-3757 traverse the membrane as a helical segment; that stretch reads GLYWAVRATYTLAAFVLWMLF. At 3758-3772 the chain is on the cytoplasmic side; the sequence is HYRNRKEVATCLELR. Residues 3773–3793 form a helical membrane-spanning segment; sequence WMVFLLNLLFISASCVFALSN. At 3794-3895 the chain is on the extracellular side; it reads SWGVCGQQQE…GSDLVTANGR (102 aa). Residues 3896-3916 form a helical membrane-spanning segment; the sequence is AYTYWLLSDTIELFFYIVILH. Residues 3917-3921 lie on the Cytoplasmic side of the membrane; it reads HNTGL. The helical transmembrane segment at 3922–3942 threads the bilayer; sequence LFQNCILVDVLLMTMSLTFII. Residues 3943 to 3950 are Extracellular-facing; that stretch reads TTARETAS. Residues 3951 to 3971 traverse the membrane as a helical segment; the sequence is TVSTIATFPCYVFFNLVSAYC. The Cytoplasmic portion of the chain corresponds to 3972–4367; sequence KEYIDRLTFY…GSTPGSALGS (396 aa). One can recognise a Guanylate cyclase 2 domain in the interval 4024–4159; the sequence is TFLFADICGF…MDVLTGNMME (136 aa). Residues aspartate 4029, isoleucine 4030, and aspartate 4073 each contribute to the Mg(2+) site. The interval 4292–4367 is disordered; sequence ASHGDSGPSD…GSTPGSALGS (76 aa). Residues 4333–4344 show a composition bias toward basic and acidic residues; that stretch reads DGLKQLRKEIER. Residues 4356–4367 show a composition bias toward polar residues; it reads DIGSTPGSALGS.

The protein in the N-terminal section; belongs to the cation transport ATPase (P-type) (TC 3.A.3) family. Type IV subfamily. This sequence in the C-terminal section; belongs to the adenylyl cyclase class-4/guanylyl cyclase family. As to quaternary structure, interacts with chaperone CDC50.1; the interaction regulates guanylate cyclase GC trafficking and sensing environmental changes. Interacts with UGO; the interaction regulates guanylate cyclase GC trafficking and catalytic activity. It depends on Mg(2+) as a cofactor. Mn(2+) serves as cofactor.

The protein localises to the cell membrane. It carries out the reaction GTP = 3',5'-cyclic GMP + diphosphate. Its function is as follows. Catalyzes the synthesis of the second messenger cGMP from GTP. During the tachyzoite lytic growth cycle in host cells, detects and transduces environmental changes in potassium, phosphatidic acid and pH levels. By producing cGMP in response to these environmental changes, activates PKG and thereby regulates PKG-dependent microneme secretion which is essential for tachyzoite motility, host cell attachment invasion of and egress from host cells. May play a role in the fission of connected tachyzoites at their basal pole during egress. Does not display flippase activity towards phosphatidylserine, phosphatidic acid or phosphatidylcholine. This is Guanylate cyclase from Toxoplasma gondii (strain ATCC 50853 / GT1).